The primary structure comprises 1132 residues: Error-prone DNA polymerase (1132 aa).

This sequence belongs to the DNA polymerase type-C family. DnaE2 subfamily.

It localises to the cytoplasm. It carries out the reaction DNA(n) + a 2'-deoxyribonucleoside 5'-triphosphate = DNA(n+1) + diphosphate. In terms of biological role, DNA polymerase involved in damage-induced mutagenesis and translesion synthesis (TLS). It is not the major replicative DNA polymerase. This chain is Error-prone DNA polymerase, found in Anaeromyxobacter dehalogenans (strain 2CP-C).